A 323-amino-acid polypeptide reads, in one-letter code: tRNA U34 carboxymethyltransferase (323 aa).

Carboxy-S-adenosyl-L-methionine-binding positions include lysine 91, tryptophan 105, lysine 110, glycine 130, 180-181, methionine 196, tyrosine 200, and arginine 315; that span reads VE.

Belongs to the class I-like SAM-binding methyltransferase superfamily. CmoB family. In terms of assembly, homotetramer.

The catalysed reaction is carboxy-S-adenosyl-L-methionine + 5-hydroxyuridine(34) in tRNA = 5-carboxymethoxyuridine(34) in tRNA + S-adenosyl-L-homocysteine + H(+). Catalyzes carboxymethyl transfer from carboxy-S-adenosyl-L-methionine (Cx-SAM) to 5-hydroxyuridine (ho5U) to form 5-carboxymethoxyuridine (cmo5U) at position 34 in tRNAs. The polypeptide is tRNA U34 carboxymethyltransferase (Trichlorobacter lovleyi (strain ATCC BAA-1151 / DSM 17278 / SZ) (Geobacter lovleyi)).